Reading from the N-terminus, the 386-residue chain is Synaptotagmin-5 (386 aa).

Pro residues predominate over residues 1–16; that stretch reads MFPEPPTPGSPAPETP. The interval 1 to 21 is disordered; it reads MFPEPPTPGSPAPETPPDSSR. Residues 1–24 are Vesicular-facing; the sequence is MFPEPPTPGSPAPETPPDSSRIRQ. The helical transmembrane segment at 25–45 threads the bilayer; it reads GAVPAWVLATILLGSGLLVFS. Residues 46 to 386 lie on the Cytoplasmic side of the membrane; sequence SCFCLYRKRC…PDRARPIPAP (341 aa). 2 consecutive C2 domains span residues 108-227 and 239-372; these read QLGR…QAWR and KLGD…AQWH. Residues Leu138, Asp139, Asp145, Asp197, Phe198, Asp199, Ser202, Asp205, Asp270, Asp276, Asp330, and Asp332 each contribute to the Ca(2+) site.

The protein belongs to the synaptotagmin family. As to quaternary structure, homodimer. Interacts with both alpha- and beta-tubulin. It depends on Ca(2+) as a cofactor. Expressed in kidney, adipose tissue, lung and heart, as well as at higher levels in brain.

It localises to the cytoplasmic vesicle. It is found in the secretory vesicle. The protein localises to the synaptic vesicle membrane. Its subcellular location is the recycling endosome membrane. In terms of biological role, may be involved in Ca(2+)-dependent exocytosis of secretory vesicles through Ca(2+) and phospholipid binding to the C2 domain or may serve as Ca(2+) sensors in the process of vesicular trafficking and exocytosis. Regulates the Ca(2+)-dependent secretion of norepinephrine in PC12 cells. Required for export from the endocytic recycling compartment to the cell surface. The polypeptide is Synaptotagmin-5 (Syt5) (Rattus norvegicus (Rat)).